An 878-amino-acid chain; its full sequence is MKKLIYYFGSNGSDGNASMKNVLGNKGAGLAEMSNLKLPIPDGFTITTELCNYFYTHNNNFPKNFQNDLKKAITELEITTGKIFGSTSNPLLLSVRSGSTVSMPGMMDTILNLGMNNEVCNALTDSCGDKRFALDSYKRFLEMYGTTVLSIPSDLFEQIYEKHKIQADIHKDSDITVELLEKIIDDFKWLHIKYTKQLINDPYEQLESAIKAVLHSWMSNRAVIYRKINNISEGFGTAINIQAMVFGNLGKTSATGVAFTRSPSTGEKKLFGEFLINAQGEDIVSGTRTPMPIIANDSNSMQAMMPEVFKELSQIAKKLEEHYLDMQDIEFTIENNKLYILQTRTAKRTAIAAINIAVQMVEEKLISKEQALMRIDPESLNQLLHTRIDYSKGLTSIAEGLPASPGAATGIAVFSPYDAEKLSHHHKVILVRHDTSPEDINGMHVSSGILTIRGGMTSHAAVVARGMGKPCVCGTSNLSIDEKKQILTAGDIVIKQGDIITIDGGSGKIFLGEMPLIQPTFSEESKLILDWADEISSLKVRANAETVNDALVSIKFGAQGIGLCRSEHMFFDKNKIPLVREMIIAPDIERRKLAVQKLLPLQMEDFKALFRVMKDKPVNIRLLDPPLHEFLPTTEEDKKNLANSLNLPLSMINQRLHAMHEVNPMLGHRGCRLGICSPEIYQMQIEAIFTAIFELHKKEHIECNLELMMPLISNVGEIKKLKMDIYEVIEELEQRYRYKFSFMLGTMIELPRAALGSKKIAKEVDYFSFGTNDLTQTTYGISRDDIASFLPYYLEEKIFESDPFTTLDEEGVGELIEIALKRGKSSNANLKLGACGEHAGNPASIEFFHRMNLNYVSCSPYRIPIARIASAQAKIKHG.

Positions 1 to 347 are N-terminal; it reads MKKLIYYFGS…LYILQTRTAK (347 aa). R96 contributes to the ATP binding site. Positions 348–404 are linker 1; that stretch reads RTAIAAINIAVQMVEEKLISKEQALMRIDPESLNQLLHTRIDYSKGLTSIAEGLPAS. The segment at 405 to 502 is central; sequence PGAATGIAVF…VIKQGDIITI (98 aa). The residue at position 457 (T457) is a Phosphothreonine; by PDRP1. Catalysis depends on H459, which acts as the Tele-phosphohistidine intermediate. Residues 503 to 537 form a linker 2 region; it reads DGGSGKIFLGEMPLIQPTFSEESKLILDWADEISS. A C-terminal region spans residues 538 to 878; it reads LKVRANAETV…ASAQAKIKHG (341 aa). Residues R565, R621, E749, G770, T771, N772, and D773 each contribute to the substrate site. Mg(2+) is bound at residue E749. D773 contacts Mg(2+). C835 serves as the catalytic Proton donor.

Belongs to the PEP-utilizing enzyme family. In terms of assembly, homodimer. Mg(2+) is required as a cofactor. Phosphorylation of Thr-457 in the dark inactivates the enzyme. Dephosphorylation upon light stimulation reactivates the enzyme.

It carries out the reaction pyruvate + phosphate + ATP = phosphoenolpyruvate + AMP + diphosphate + H(+). Activated by light-induced dephosphorylation. Inhibited by dark-induced phosphorylation. Both reactions are catalyzed by PDRP1. Functionally, catalyzes the reversible phosphorylation of pyruvate and phosphate. The protein is Pyruvate, phosphate dikinase (ppdK) of Rickettsia felis (strain ATCC VR-1525 / URRWXCal2) (Rickettsia azadi).